The chain runs to 462 residues: Sensor histidine kinase ZraS (462 aa).

Topologically, residues 1-14 (MNVMRLSKDSVAVG) are cytoplasmic. A helical transmembrane segment spans residues 15-35 (LSWLLTGLILLLVCLFSALIV). Residues 36–197 (RDYGRENEAA…ADHARGLRNM (162 aa)) are Periplasmic-facing. The chain crosses the membrane as a helical span at residues 198 to 218 (VIMLCAAGVVMAATVLAQFWF). The Cytoplasmic segment spans residues 219 to 462 (RRYQRSRKQL…VNGQQKDEQG (244 aa)). Residues 247-455 (GVAHEIRNPL…LFTFYLPVNG (209 aa)) enclose the Histidine kinase domain. A Phosphohistidine; by autocatalysis modification is found at His-250.

Autophosphorylated.

The protein resides in the cell inner membrane. It catalyses the reaction ATP + protein L-histidine = ADP + protein N-phospho-L-histidine.. Its activity is regulated as follows. Activity of the ZraS/ZraR two-component system is repressed by the zinc-bound form of ZraP, which probably interacts with the periplasmic region of ZraS. Part of the Zra signaling pathway, an envelope stress response (ESR) system composed of the periplasmic accessory protein ZraP, the histidine kinase ZraS and the transcriptional regulator ZraR. The ZraPSR system contributes to antibiotic resistance and is important for membrane integrity in the presence of membrane-targeting biocides. ZraS is a member of the two-component regulatory system ZraS/ZraR. Functions as a membrane-associated sensor kinase that phosphorylates ZraR in response to high concentrations of Zn(2+) or Pb(2+) in the medium. In Klebsiella oxytoca, this protein is Sensor histidine kinase ZraS (zraS).